Reading from the N-terminus, the 399-residue chain is Small ribosomal subunit protein uS3m (399 aa).

It belongs to the universal ribosomal protein uS3 family.

The protein resides in the mitochondrion. Essential for mitochondrial protein synthesis and required for the maturation of small ribosomal subunits. This is Small ribosomal subunit protein uS3m from Penicillium urticae.